The primary structure comprises 227 residues: Ribonuclease 3 (227 aa).

Residues 4–126 (LDRLERKIGY…IIGAMSLDQG (123 aa)) form the RNase III domain. Mg(2+) is bound at residue glutamate 39. Aspartate 43 is a catalytic residue. Residues aspartate 112 and glutamate 115 each coordinate Mg(2+). The active site involves glutamate 115. One can recognise a DRBM domain in the interval 153–226 (DAKTRLQEYL…AEQILKELDI (74 aa)).

The protein belongs to the ribonuclease III family. In terms of assembly, homodimer. It depends on Mg(2+) as a cofactor.

It localises to the cytoplasm. It carries out the reaction Endonucleolytic cleavage to 5'-phosphomonoester.. Functionally, digests double-stranded RNA. Involved in the processing of primary rRNA transcript to yield the immediate precursors to the large and small rRNAs (23S and 16S). Processes some mRNAs, and tRNAs when they are encoded in the rRNA operon. Processes pre-crRNA and tracrRNA of type II CRISPR loci if present in the organism. This is Ribonuclease 3 from Haemophilus influenzae (strain ATCC 51907 / DSM 11121 / KW20 / Rd).